The following is a 579-amino-acid chain: MQICGSSVASVAAGTSFQVLGPVCWQQLDLKMAVRVLWGGLSLLRVLWCLLPQTGYVHPDEFFQSPEVMAEDILGVQAARPWEFYPSSSCRSVLFPLLISGSTFWLLRLWEELGPWPGLVSGYALLVGPRLLLTALSFALDGAVYHLAPPMGADRWNALALLSGSYVTLVFYTRTFSNTIEGLLFTWLLVLVSSHVTWGPTRKEPAPGPRWRSWLLGGIVAAGFFNRPTFLAFAVVPLYLWGTRGATNPGLKSLTREALVLLPGAALTAAVFVATDSWYFSSPATSRNLVLTPVNFLHYNLNPQNLARHGTHARLTHLAVNGFLLFGVLHAQALQAAWQRLQVGLQASAQMGLLRALGARSLLSSPRSYLLLLYFMPLALLSAFSHQEARFLIPLLVPLVLLCSPQTQPVPWKGTVVLFNALGALLFGCLHQGGLVPGLEYLEQVVHAPVLPSTPTHYTLLFTHTYMPPRHLLHLPGLGAPVEVVDMGGTEDWALCQTLKSFTRQPACQVAGGPWLCRLFVVTPGTTRRAVEKCSFPFKNETLLFPHLTLEDPPALSSLLSGAWRDHLSLHIVELGEET.

8 helical membrane passes run 131–151 (LLLT…APPM), 156–173 (WNAL…VFYT), 180–200 (IEGL…TWGP), 216–236 (LGGI…FAVV), 258–278 (ALVL…TDSW), 369–389 (YLLL…HQEA), 391–411 (FLIP…QPVP), and 416–436 (VVLF…GGLV).

Belongs to the glycosyltransferase 22 family. PIGZ subfamily. In terms of tissue distribution, widely expressed at low level, with highest level in brain and colon.

The protein resides in the endoplasmic reticulum membrane. Its pathway is glycolipid biosynthesis; glycosylphosphatidylinositol-anchor biosynthesis. In terms of biological role, alpha-1,2-mannosyltransferase that catalyzes the transfer of the fourth mannose, via an alpha-1,2 bond, from a dolichol-phosphate-mannose (Dol-P-Man) to an alpha-D-Man-(1-&gt;2)-alpha-D-Man-(1-&gt;6)-2-PEtn-alpha-D-Man-(1-&gt;4)-alpha-D-GlcN-(1-&gt;6)-(1-radyl,2-acyl-sn-glycero-3-phospho)-2-acyl-inositol (also termed H6) intermediate and participates in the twelfth step of the glycosylphosphatidylinositol-anchor biosynthesis. The presence of a fourth mannose in GPI is facultative, suggesting that it only exists in some tissues. In Homo sapiens (Human), this protein is GPI alpha-1,2-mannosyltransferase 4.